A 291-amino-acid chain; its full sequence is Cilia- and flagella-associated protein 298 (291 aa).

It belongs to the CFAP298 family.

The sequence is that of Cilia- and flagella-associated protein 298 from Drosophila melanogaster (Fruit fly).